Here is a 364-residue protein sequence, read N- to C-terminus: MSCIAVEAVLLGILLYIPIVLSDDRAPIPSNSAQLNSWFDGIIQPVAVRKATMDPALVTAEGQTKVIKLKSDGSGDFKSINEAIKSIPDDNTKRVILSLAPGNYSEKVKIGMYKHYITFYGEDPNNMPILVFGGTAAEYGTVDSATLIVESNYFSAVNLKIVNSAPRPDGKRVGAQAAALRISGDKASFYNVKIYGFQDTLCDDKGKHFYKDCYIEGTVDFIFGSGKSIFLNTELHAVPGDQPAIITAQARKTDSEDTGYYFVNCRVTGGGAFLGRSWMPAAKVVFAYTEMVDAIHPEGWILVKPEHESTVRFSEYNNKGPGANMEKRAKFVKRLSDAEAKQSISLGSIEASKWLLPPRVVGLP.

An N-terminal signal peptide occupies residues 1–22; it reads MSCIAVEAVLLGILLYIPIVLS. N103 is a glycosylation site (N-linked (GlcNAc...) asparagine). Residue D220 is part of the active site.

This sequence belongs to the pectinesterase family. In terms of processing, glycosylated. In terms of tissue distribution, expressed in pollen.

It is found in the secreted. It carries out the reaction [(1-&gt;4)-alpha-D-galacturonosyl methyl ester](n) + n H2O = [(1-&gt;4)-alpha-D-galacturonosyl](n) + n methanol + n H(+). The protein operates within glycan metabolism; pectin degradation; 2-dehydro-3-deoxy-D-gluconate from pectin: step 1/5. Catalyzes the demethylesterification of homogalacturonan components of pectin. May be involved in pollen tube development. The sequence is that of Pectinesterase 1 from Olea europaea (Common olive).